Here is a 386-residue protein sequence, read N- to C-terminus: Signal transduction histidine-protein kinase/phosphatase DegS (386 aa).

The 197-residue stretch at 188–384 folds into the Histidine kinase domain; it reads KLSREIHDGP…TIIISIPITT (197 aa). A Phosphohistidine; by autocatalysis modification is found at H194.

Post-translationally, autophosphorylated.

It localises to the cytoplasm. It carries out the reaction ATP + protein L-histidine = ADP + protein N-phospho-L-histidine.. Member of the two-component regulatory system DegS/DegU, which plays an important role in the transition growth phase. Acts as both a protein kinase that undergoes autophosphorylation and subsequently transfers the phosphate to DegU, and a protein phosphatase that dephosphorylates phospho-DegU. This is Signal transduction histidine-protein kinase/phosphatase DegS (degS) from Brevibacillus brevis (Bacillus brevis).